The following is a 521-amino-acid chain: Probable feruloyl esterase B-2 (521 aa).

A signal peptide spans 1–19 (MKVSLWLTLLGVNLSLALA). N-linked (GlcNAc...) asparagine glycans are attached at residues asparagine 13, asparagine 53, asparagine 85, asparagine 98, and asparagine 138. 2 disulfides stabilise this stretch: cysteine 28–cysteine 75 and cysteine 63–cysteine 114. 4 cysteine pairs are disulfide-bonded: cysteine 187–cysteine 440, cysteine 257–cysteine 274, cysteine 283–cysteine 291, and cysteine 506–cysteine 520. The Acyl-ester intermediate role is filled by serine 188. The N-linked (GlcNAc...) asparagine glycan is linked to asparagine 235. Ca(2+) contacts are provided by aspartate 258, aspartate 261, valine 263, aspartate 265, and isoleucine 267. The Charge relay system role is filled by aspartate 399. Asparagine 419 is a glycosylation site (N-linked (GlcNAc...) asparagine). Histidine 439 functions as the Charge relay system in the catalytic mechanism.

It belongs to the tannase family.

Its subcellular location is the secreted. The catalysed reaction is feruloyl-polysaccharide + H2O = ferulate + polysaccharide.. In terms of biological role, involved in degradation of plant cell walls. Hydrolyzes the feruloyl-arabinose ester bond in arabinoxylans as well as the feruloyl-galactose and feruloyl-arabinose ester bonds in pectin. This chain is Probable feruloyl esterase B-2 (faeB-2), found in Aspergillus flavus (strain ATCC 200026 / FGSC A1120 / IAM 13836 / NRRL 3357 / JCM 12722 / SRRC 167).